We begin with the raw amino-acid sequence, 1381 residues long: Hepatocyte growth factor receptor (1381 aa).

The N-terminal stretch at Met1–Gly24 is a signal peptide. The Extracellular segment spans residues Glu25–Thr932. Residues Lys27–Leu515 enclose the Sema domain. A glycan (N-linked (GlcNAc...) asparagine) is linked at Asn45. 4 disulfide bridges follow: Cys95–Cys101, Cys98–Cys160, Cys133–Cys141, and Cys172–Cys175. Asn106 carries N-linked (GlcNAc...) asparagine glycosylation. Residue Asn149 is glycosylated (N-linked (GlcNAc...) asparagine). Asn202 is a glycosylation site (N-linked (GlcNAc...) asparagine). 2 disulfides stabilise this stretch: Cys298/Cys363 and Cys385/Cys397. N-linked (GlcNAc...) asparagine glycosylation occurs at Asn399. Disulfide bonds link Cys520-Cys538, Cys526-Cys561, Cys529-Cys545, and Cys541-Cys551. IPT/TIG domains lie at Pro563 to Val655, Pro657 to Arg739, and Pro742 to Val836. Thr582 carries an O-linked (Man) threonine glycan. Residues Asn607 and Asn635 are each glycosylated (N-linked (GlcNAc...) asparagine). O-linked (Man) threonine glycans are attached at residues Thr676 and Thr761. 3 N-linked (GlcNAc...) asparagine glycosylation sites follow: Asn785, Asn879, and Asn930. Residues Gly933–Leu955 traverse the membrane as a helical segment. Residues Lys956–Thr1381 are Cytoplasmic-facing. Phosphoserine is present on Ser966. Residue Thr977 is modified to Phosphothreonine. 3 positions are modified to phosphoserine: Ser990, Ser997, and Ser1000. A Phosphotyrosine modification is found at Tyr1003. One can recognise a Protein kinase domain in the interval Val1078 to Ile1345. ATP is bound by residues Ile1084–Val1092 and Lys1110. Asp1204 serves as the catalytic Proton acceptor. The interaction with RANBP9 stretch occupies residues Leu1212–Thr1381. Tyr1230 is subject to Phosphotyrosine. Phosphotyrosine; by autocatalysis is present on residues Tyr1234 and Tyr1235. Thr1289 is modified (phosphothreonine). The tract at residues Trp1320 to Val1359 is interaction with MUC20. A phosphotyrosine; by autocatalysis mark is found at Tyr1349 and Tyr1356. Tyr1365 carries the phosphotyrosine modification.

This sequence belongs to the protein kinase superfamily. Tyr protein kinase family. Heterodimer made of an alpha chain (50 kDa) and a beta chain (145 kDa) which are disulfide linked. Binds PLXNB1. Interacts when phosphorylated with downstream effectors including STAT3, PIK3R1, SRC, PCLG1, GRB2 and GAB1. Interacts with SPSB1, SPSB2 and SPSB4. Interacts with INPP5D/SHIP1. When phosphorylated at Tyr-1356, interacts with INPPL1/SHIP2. Interacts with RANBP9 and RANBP10, as well as SPSB1, SPSB2, SPSB3 and SPSB4. SPSB1 binding occurs in the presence and in the absence of HGF, however HGF treatment has a positive effect on this interaction. Interacts with MUC20; prevents interaction with GRB2 and suppresses hepatocyte growth factor-induced cell proliferation. Interacts with GRB10. Interacts with PTPN1 and PTPN2. Interacts with tensin TNS3. Interacts (when phosphorylated) with tensin TNS4 (via SH2 domain); the interaction increases MET protein stability by inhibiting MET endocytosis and subsequent lysosomal degradation. Post-translationally, autophosphorylated in response to ligand binding on Tyr-1234 and Tyr-1235 in the kinase domain leading to further phosphorylation of Tyr-1349 and Tyr-1356 in the C-terminal multifunctional docking site. Dephosphorylated by PTPRJ at Tyr-1349 and Tyr-1365. Dephosphorylated by PTPN1 and PTPN2. Ubiquitinated. Ubiquitination by CBL regulates the receptor stability and activity through proteasomal degradation. In terms of processing, O-mannosylation of IPT/TIG domains by TMEM260 is required for protein maturation. O-mannosylated residues are composed of single mannose glycans that are not elongated or modified.

The protein localises to the membrane. It carries out the reaction L-tyrosyl-[protein] + ATP = O-phospho-L-tyrosyl-[protein] + ADP + H(+). With respect to regulation, in its inactive state, the C-terminal tail interacts with the catalytic domain and inhibits the kinase activity. Upon ligand binding, the C-terminal tail is displaced and becomes phosphorylated, thus increasing the kinase activity. Receptor tyrosine kinase that transduces signals from the extracellular matrix into the cytoplasm by binding to hepatocyte growth factor/HGF ligand. Regulates many physiological processes including proliferation, scattering, morphogenesis and survival. Ligand binding at the cell surface induces autophosphorylation of MET on its intracellular domain that provides docking sites for downstream signaling molecules. Following activation by ligand, interacts with the PI3-kinase subunit PIK3R1, PLCG1, SRC, GRB2, STAT3 or the adapter GAB1. Recruitment of these downstream effectors by MET leads to the activation of several signaling cascades including the RAS-ERK, PI3 kinase-AKT, or PLCgamma-PKC. The RAS-ERK activation is associated with the morphogenetic effects while PI3K/AKT coordinates prosurvival effects. During embryonic development, MET signaling plays a role in gastrulation, development and migration of muscles and neuronal precursors, angiogenesis and kidney formation. In adults, participates in wound healing as well as organ regeneration and tissue remodeling. Also promotes differentiation and proliferation of hematopoietic cells. The protein is Hepatocyte growth factor receptor (MET) of Ateles geoffroyi (Black-handed spider monkey).